The chain runs to 126 residues: Acidic phospholipase A2 3 (126 aa).

A propeptide spanning residues 1-7 (SNRPMPL) is cleaved from the precursor. Disulfide bonds link Cys18-Cys78, Cys33-Cys125, Cys35-Cys51, Cys50-Cys106, Cys57-Cys99, Cys67-Cys92, and Cys85-Cys97. Residues Tyr34, Gly36, and Gly38 each coordinate Ca(2+). The active site involves His54. Asp55 provides a ligand contact to Ca(2+). Asp100 is a catalytic residue.

It belongs to the phospholipase A2 family. Group I subfamily. D49 sub-subfamily. Ca(2+) serves as cofactor. As to expression, expressed by the venom gland.

The protein resides in the secreted. It carries out the reaction a 1,2-diacyl-sn-glycero-3-phosphocholine + H2O = a 1-acyl-sn-glycero-3-phosphocholine + a fatty acid + H(+). In terms of biological role, PLA2 catalyzes the calcium-dependent hydrolysis of the 2-acyl groups in 3-sn-phosphoglycerides. This Naja sagittifera (Andaman cobra) protein is Acidic phospholipase A2 3.